Consider the following 238-residue polypeptide: Ribosomal RNA small subunit methyltransferase G (238 aa).

S-adenosyl-L-methionine contacts are provided by residues G78, F83, 129–130, and R148; that span reads AE. A disordered region spans residues 217 to 238; sequence KKKETPKKYPRKAGTPAKSPIK.

Belongs to the methyltransferase superfamily. RNA methyltransferase RsmG family.

Its subcellular location is the cytoplasm. Specifically methylates the N7 position of a guanine in 16S rRNA. In Lactococcus lactis subsp. cremoris (strain MG1363), this protein is Ribosomal RNA small subunit methyltransferase G.